The primary structure comprises 37 residues: Photosystem II reaction center protein M (37 aa).

The helical transmembrane segment at 7–27 threads the bilayer; it reads AFIAVLLFLAVPTAFLLIPYV.

It belongs to the PsbM family. PSII is composed of 1 copy each of membrane proteins PsbA, PsbB, PsbC, PsbD, PsbE, PsbF, PsbH, PsbI, PsbJ, PsbK, PsbL, PsbM, PsbT, PsbX, PsbY, PsbZ, Psb30/Ycf12, at least 3 peripheral proteins of the oxygen-evolving complex and a large number of cofactors. It forms dimeric complexes.

The protein localises to the plastid. It localises to the chloroplast thylakoid membrane. One of the components of the core complex of photosystem II (PSII). PSII is a light-driven water:plastoquinone oxidoreductase that uses light energy to abstract electrons from H(2)O, generating O(2) and a proton gradient subsequently used for ATP formation. It consists of a core antenna complex that captures photons, and an electron transfer chain that converts photonic excitation into a charge separation. This subunit is found at the monomer-monomer interface. The chain is Photosystem II reaction center protein M from Pinus thunbergii (Japanese black pine).